Here is a 37-residue protein sequence, read N- to C-terminus: Large ribosomal subunit protein bL36 (37 aa).

It belongs to the bacterial ribosomal protein bL36 family.

This Thioalkalivibrio sulfidiphilus (strain HL-EbGR7) protein is Large ribosomal subunit protein bL36.